A 712-amino-acid chain; its full sequence is Cadherin-13 (712 aa).

Residues 1–22 form the signal peptide; that stretch reads MQHKTQLTLSFLLSQVLLLACA. Residues 23–138 constitute a propeptide that is removed on maturation; the sequence is EDLECTPGFQ…GNLGIPRQKR (116 aa). A glycan (N-linked (GlcNAc...) asparagine) is linked at Asn86. Cadherin domains are found at residues 143–245, 246–363, 364–477, 478–585, and 586–680; these read TPIL…RPMF, KEGP…PPEF, TKKE…GPVF, HPNP…VPSL, and YPTL…LQVC. N-linked (GlcNAc...) asparagine glycans are attached at residues Asn382, Asn500, Asn530, Asn638, and Asn671. Residue Asp693 is the site of GPI-anchor amidated aspartate attachment. A propeptide spans 694 to 712 (removed in mature form); the sequence is ALHISMTLILLSLFSLFCL.

In terms of assembly, by contrast to classical cadherins, homodimerization in trans is not mediated by cadherin EC1 domain strand-swapping, but instead through a homophilic adhesive interface which joins two elongated EC1-EC2 domains through a region near their Ca2+-binding sites to form a tetrahedral, X-like shape. Neural tissues. Also found in muscles; kidney and retina.

It is found in the cell membrane. The protein resides in the cytoplasm. Its function is as follows. Cadherins are calcium-dependent cell adhesion proteins. They preferentially interact with themselves in a homophilic manner in connecting cells; cadherins may thus contribute to the sorting of heterogeneous cell types. May act as a negative regulator of neural cell growth. This chain is Cadherin-13 (CDH13), found in Gallus gallus (Chicken).